Reading from the N-terminus, the 174-residue chain is V-type proton ATPase catalytic subunit A (174 aa).

This sequence belongs to the ATPase alpha/beta chains family. In terms of assembly, V-ATPase is a heteromultimeric enzyme made up of two complexes: the ATP-hydrolytic V1 complex and the proton translocation V0 complex. The V1 complex consists of three catalytic AB heterodimers that form a heterohexamer, three peripheral stalks each consisting of EG heterodimers, one central rotor including subunits D and F, and the regulatory subunits C and H. The proton translocation complex V0 consists of the proton transport subunit a, a ring of proteolipid subunits c9c'', rotary subunit d, subunits e and f, and the accessory subunits ATP6AP1/Ac45 and ATP6AP2/PRR. Interacts with the V0 complex V-ATPase subunit a4 ATP6V0A4. Interacts with WFS1. Interacts with alpha-crystallin B chain/CRYAB and with MTOR, forming a ternary complex.

It is found in the cytoplasm. Its subcellular location is the cytosol. The protein resides in the cytoplasmic vesicle. It localises to the secretory vesicle. The protein localises to the clathrin-coated vesicle membrane. It is found in the lysosome. It carries out the reaction ATP + H2O + 4 H(+)(in) = ADP + phosphate + 5 H(+)(out). Its activity is regulated as follows. ATP hydrolysis occurs at the interface between the nucleotide-binding domains of subunits A and B. ATP hydrolysis triggers a conformational change in the subunits D and F, which induces a shift of subunit d. The c-ring is subsequently rotated and results in a continuous proton translocation across the membrane. Its function is as follows. Catalytic subunit of the V1 complex of vacuolar(H+)-ATPase (V-ATPase), a multisubunit enzyme composed of a peripheral complex (V1) that hydrolyzes ATP and a membrane integral complex (V0) that translocates protons. V-ATPase is responsible for acidifying and maintaining the pH of intracellular compartments and in some cell types, is targeted to the plasma membrane, where it is responsible for acidifying the extracellular environment. In aerobic conditions, involved in intracellular iron homeostasis, thus triggering the activity of Fe(2+) prolyl hydroxylase (PHD) enzymes, and leading to HIF1A hydroxylation and subsequent proteasomal degradation. May play a role in neurite development and synaptic connectivity. In Mesocricetus auratus (Golden hamster), this protein is V-type proton ATPase catalytic subunit A.